The following is a 287-amino-acid chain: Acetyl-coenzyme A carboxylase carboxyl transferase subunit beta (287 aa).

Residues 25-287 (VWTKCSACEQ…KMLNTHVIEE (263 aa)) enclose the CoA carboxyltransferase N-terminal domain. Cys-29, Cys-32, Cys-48, and Cys-51 together coordinate Zn(2+). The segment at 29 to 51 (CSACEQVLYRAELERNLEVCPKC) adopts a C4-type zinc-finger fold.

Belongs to the AccD/PCCB family. As to quaternary structure, acetyl-CoA carboxylase is a heterohexamer composed of biotin carboxyl carrier protein (AccB), biotin carboxylase (AccC) and two subunits each of ACCase subunit alpha (AccA) and ACCase subunit beta (AccD). Zn(2+) serves as cofactor.

Its subcellular location is the cytoplasm. The enzyme catalyses N(6)-carboxybiotinyl-L-lysyl-[protein] + acetyl-CoA = N(6)-biotinyl-L-lysyl-[protein] + malonyl-CoA. The protein operates within lipid metabolism; malonyl-CoA biosynthesis; malonyl-CoA from acetyl-CoA: step 1/1. Its function is as follows. Component of the acetyl coenzyme A carboxylase (ACC) complex. Biotin carboxylase (BC) catalyzes the carboxylation of biotin on its carrier protein (BCCP) and then the CO(2) group is transferred by the transcarboxylase to acetyl-CoA to form malonyl-CoA. In Aeromonas hydrophila subsp. hydrophila (strain ATCC 7966 / DSM 30187 / BCRC 13018 / CCUG 14551 / JCM 1027 / KCTC 2358 / NCIMB 9240 / NCTC 8049), this protein is Acetyl-coenzyme A carboxylase carboxyl transferase subunit beta.